We begin with the raw amino-acid sequence, 203 residues long: MKVLIPFYSMYGHIYRMAEAVAEGVREVSGAEAVLRRVPETLPTDVLQKMGAVEPQKAFAHIPVCTVDELAAADAIIFGTPTRFGNMCGQMRQFLDATGGLWVKGGLVGKAGGVFTSSATQHGGQESTILTFHTFLLHQGMVLVGLPYAFAGQMRIDEITGGSPYGASTIAGGQGERLPSENELAGARYQGKYIAEIAAKLKG.

The Flavodoxin-like domain maps to 3 to 194 (VLIPFYSMYG…AGARYQGKYI (192 aa)). FMN is bound by residues 9 to 14 (SMYGHI) and 82 to 84 (TRF). Y11 contributes to the NAD(+) binding site. W102 contacts substrate. FMN contacts are provided by residues 117–123 (SSATQHG) and H138.

It belongs to the WrbA family. The cofactor is FMN.

It catalyses the reaction a quinone + NADH + H(+) = a quinol + NAD(+). It carries out the reaction a quinone + NADPH + H(+) = a quinol + NADP(+). The sequence is that of NAD(P)H dehydrogenase (quinone) from Geobacter metallireducens (strain ATCC 53774 / DSM 7210 / GS-15).